Consider the following 54-residue polypeptide: Large ribosomal subunit protein bL32 (54 aa).

The protein belongs to the bacterial ribosomal protein bL32 family.

This is Large ribosomal subunit protein bL32 from Buchnera aphidicola subsp. Baizongia pistaciae (strain Bp).